Consider the following 421-residue polypeptide: Ankyrin repeat domain-containing protein 61 (421 aa).

8 ANK repeats span residues 27 to 57, 74 to 103, 107 to 146, 166 to 195, 199 to 228, 233 to 272, 276 to 305, and 309 to 342; these read TLHS…NQPL, QPIF…DPEV, QGFT…NAVL, NKHS…QVNA, SSMT…NVNC, TGNT…QVNA, EGQT…NVNI, and NGES…PLRL.

In Mus musculus (Mouse), this protein is Ankyrin repeat domain-containing protein 61 (Ankrd61).